The following is a 60-amino-acid chain: UPF0434 protein mma_2578 (60 aa).

The protein belongs to the UPF0434 family.

This Janthinobacterium sp. (strain Marseille) (Minibacterium massiliensis) protein is UPF0434 protein mma_2578.